Here is a 343-residue protein sequence, read N- to C-terminus: MKIKALSKLKPEEGIWMTEVDKPVLGHNDLLIKIKKTAICGTDVHIYNWDEWSQKTIPVPMVVGHEYVGEVVGIGQEVRGFEIGDRVSGEGHITCGHCRNCRGGRTHLCRNTIGVGVNRTGCFSEYLVIPAFNAFKIPANISDDLASIFDPFGNAVHTALSFDLVGEDVLITGAGPIGIMAAAVAKHVGARHVVITDVNEYRLDLARKMGVTRAVNVAEQKLDDVMAELGMTEGFDVGLEMSGNPSAFNSMLKTMNHGGRIALLGIPPSDMGIDWNQVIFKGLVIKGIYGREMFETWYKMASLIQSGLDLTPIITHHFKVDDFQQGFDIMRSGMSGKVILDWE.

Position 40 (cysteine 40) interacts with Zn(2+). Residues threonine 42 and histidine 45 each act as charge relay system in the active site. Histidine 65, glutamate 66, cysteine 95, cysteine 98, cysteine 101, and cysteine 109 together coordinate Zn(2+). NAD(+)-binding positions include isoleucine 177, aspartate 197, arginine 202, 264 to 266 (LGI), and 288 to 289 (IY).

It belongs to the zinc-containing alcohol dehydrogenase family. As to quaternary structure, homotetramer. Zn(2+) serves as cofactor.

It is found in the cytoplasm. The enzyme catalyses L-threonine + NAD(+) = (2S)-2-amino-3-oxobutanoate + NADH + H(+). Its pathway is amino-acid degradation; L-threonine degradation via oxydo-reductase pathway; glycine from L-threonine: step 1/2. Catalyzes the NAD(+)-dependent oxidation of L-threonine to 2-amino-3-ketobutyrate. The chain is L-threonine 3-dehydrogenase from Vibrio vulnificus (strain CMCP6).